We begin with the raw amino-acid sequence, 863 residues long: Leucine--tRNA ligase (863 aa).

Positions Pro42–His52 match the 'HIGH' region motif. The 'KMSKS' region motif lies at Lys622–Ser626. Residue Lys625 coordinates ATP.

The protein belongs to the class-I aminoacyl-tRNA synthetase family.

It is found in the cytoplasm. It catalyses the reaction tRNA(Leu) + L-leucine + ATP = L-leucyl-tRNA(Leu) + AMP + diphosphate. This chain is Leucine--tRNA ligase, found in Shewanella loihica (strain ATCC BAA-1088 / PV-4).